Consider the following 161-residue polypeptide: ATP synthase subunit b (161 aa).

Residues 1–21 (MYLNATILGQVIAFILFVWFC) traverse the membrane as a helical segment.

It belongs to the ATPase B chain family. In terms of assembly, F-type ATPases have 2 components, F(1) - the catalytic core - and F(0) - the membrane proton channel. F(1) has five subunits: alpha(3), beta(3), gamma(1), delta(1), epsilon(1). F(0) has three main subunits: a(1), b(2) and c(10-14). The alpha and beta chains form an alternating ring which encloses part of the gamma chain. F(1) is attached to F(0) by a central stalk formed by the gamma and epsilon chains, while a peripheral stalk is formed by the delta and b chains.

The protein resides in the cell inner membrane. Functionally, f(1)F(0) ATP synthase produces ATP from ADP in the presence of a proton or sodium gradient. F-type ATPases consist of two structural domains, F(1) containing the extramembraneous catalytic core and F(0) containing the membrane proton channel, linked together by a central stalk and a peripheral stalk. During catalysis, ATP synthesis in the catalytic domain of F(1) is coupled via a rotary mechanism of the central stalk subunits to proton translocation. Component of the F(0) channel, it forms part of the peripheral stalk, linking F(1) to F(0). This Blochmanniella floridana protein is ATP synthase subunit b.